Reading from the N-terminus, the 249-residue chain is Putative ABC transporter ATP-binding protein GSU1281 (249 aa).

The ABC transporter domain occupies 6 to 236; the sequence is VEVRDLCHCY…DELLATCRLE (231 aa). An ATP-binding site is contributed by 39-46; the sequence is GANGAGKS.

It belongs to the ABC transporter superfamily.

Its subcellular location is the cell inner membrane. Functionally, probably part of an ABC transporter complex. Responsible for energy coupling to the transport system. The protein is Putative ABC transporter ATP-binding protein GSU1281 of Geobacter sulfurreducens (strain ATCC 51573 / DSM 12127 / PCA).